The following is an 861-amino-acid chain: Protein argonaute-4 (861 aa).

In terms of domain architecture, PAZ spans 219–338 (PIIEFMCEVL…LPLEVCNIVA (120 aa)). Positions 509–820 (LIVVILPGKT…VAFRARYHLV (312 aa)) constitute a Piwi domain. The segment at 825–846 (DSAEGSHVSGQSNGRDPQALAK) is disordered.

This sequence belongs to the argonaute family. Ago subfamily. As to quaternary structure, interacts with EIF4B, IMP8, PRMT5, TNRC6A and TNRC6B. Interacts with ZFP36. Post-translationally, ubiquitinated on surface-exposed lysines by a SCF-like E3 ubiquitin-protein ligase complex containing ZSWIM8 during target-directed microRNA degradation (TDMD), a process that mediates degradation of microRNAs (miRNAs). Ubiquitination by the SCF-like E3 ubiquitin-protein ligase complex containing ZSWIM8 leads to its subsequent degradation, thereby exposing miRNAs for degradation. ZSWIM8 recognizes and binds AGO4 when it is engaged with a TDMD target.

It localises to the cytoplasm. It is found in the P-body. Required for RNA-mediated gene silencing (RNAi). Binds to short RNAs such as microRNAs (miRNAs) and represses the translation of mRNAs which are complementary to them. Lacks endonuclease activity and does not appear to cleave target mRNAs. Also required for RNA-directed transcription and replication of the human hapatitis delta virus (HDV). This is Protein argonaute-4 (AGO4) from Homo sapiens (Human).